Consider the following 319-residue polypeptide: Ninja-family protein AFP4 (319 aa).

A compositionally biased stretch (basic and acidic residues) spans aspartate 39 to aspartate 54. Disordered stretches follow at residues aspartate 39 to valine 63, phenylalanine 99 to arginine 120, and valine 205 to asparagine 228.

It belongs to the Ninja family. Interacts with ABI5/DPBF1, AREB3/DPBF3, EEL/DPBF4, ABF1 and ABF3/DPBF5. In terms of tissue distribution, predominantly expressed in roots and seedlings.

Its subcellular location is the nucleus. Functionally, acts as a negative regulator of abscisic acid (ABA) and salinity responses. The protein is Ninja-family protein AFP4 (AFP4) of Arabidopsis thaliana (Mouse-ear cress).